A 356-amino-acid polypeptide reads, in one-letter code: S-adenosylmethionine:tRNA ribosyltransferase-isomerase (356 aa).

This sequence belongs to the QueA family. In terms of assembly, monomer.

It is found in the cytoplasm. It catalyses the reaction 7-aminomethyl-7-carbaguanosine(34) in tRNA + S-adenosyl-L-methionine = epoxyqueuosine(34) in tRNA + adenine + L-methionine + 2 H(+). It functions in the pathway tRNA modification; tRNA-queuosine biosynthesis. Functionally, transfers and isomerizes the ribose moiety from AdoMet to the 7-aminomethyl group of 7-deazaguanine (preQ1-tRNA) to give epoxyqueuosine (oQ-tRNA). The sequence is that of S-adenosylmethionine:tRNA ribosyltransferase-isomerase from Xanthomonas oryzae pv. oryzae (strain KACC10331 / KXO85).